Here is a 272-residue protein sequence, read N- to C-terminus: Small ribosomal subunit protein uS3 (272 aa).

A KH type-2 domain is found at 43 to 111 (IRELMTTGME…QIQLNILEVK (69 aa)). The disordered stretch occupies residues 218–272 (AKEAAQPSGRGRGGERRGGGERRRRNDRAERAPRQENAGAGAETPAAAPAEGGNA). Residues 229 to 238 (RGGERRGGGE) show a composition bias toward basic and acidic residues. A compositionally biased stretch (low complexity) spans 253 to 272 (ENAGAGAETPAAAPAEGGNA).

Belongs to the universal ribosomal protein uS3 family. As to quaternary structure, part of the 30S ribosomal subunit. Forms a tight complex with proteins S10 and S14.

Its function is as follows. Binds the lower part of the 30S subunit head. Binds mRNA in the 70S ribosome, positioning it for translation. The polypeptide is Small ribosomal subunit protein uS3 (Micrococcus luteus (strain ATCC 4698 / DSM 20030 / JCM 1464 / CCM 169 / CCUG 5858 / IAM 1056 / NBRC 3333 / NCIMB 9278 / NCTC 2665 / VKM Ac-2230) (Micrococcus lysodeikticus)).